Reading from the N-terminus, the 366-residue chain is MKPSIITKLKVLQERYYEVETLLGNSEVAKDRERLRILSKEYAQLTDIHTCFQHWQQVQENISITGPMLEDPEMHDMVQDELNKLHSLLSTLEQQLLTLLLQKDSNKDPNDERGCFIEVRAGTGGDEAALFAGDLFRMYSRYAEIHSWQIDVISASSGPHGGYKEIIVKMSHDNAYGQLKFESGGHRVQRIPETESQGRIHTSSCTVAVIPDILHAELPEISPEDIRVDTFRSSGAGGQHVNTTESAIRITHLPTGLVVECQDERSQHKNKAKAMAVLSARLRAAEAQCRQQEESCMRRNLLGSGYRSDRIRTYNFPQGRITDHRIGFTTYRLNEVIEGKLEILLQPIIQEYQTNQLIALSESEIT.

Gln-239 is modified (N5-methylglutamine).

This sequence belongs to the prokaryotic/mitochondrial release factor family. Methylated by PrmC. Methylation increases the termination efficiency of RF1.

The protein resides in the cytoplasm. Its function is as follows. Peptide chain release factor 1 directs the termination of translation in response to the peptide chain termination codons UAG and UAA. In Baumannia cicadellinicola subsp. Homalodisca coagulata, this protein is Peptide chain release factor 1.